The chain runs to 227 residues: Enolase-phosphatase E1 (227 aa).

It belongs to the HAD-like hydrolase superfamily. MasA/MtnC family. As to quaternary structure, monomer. It depends on Mg(2+) as a cofactor.

The catalysed reaction is 5-methylsulfanyl-2,3-dioxopentyl phosphate + H2O = 1,2-dihydroxy-5-(methylsulfanyl)pent-1-en-3-one + phosphate. The protein operates within amino-acid biosynthesis; L-methionine biosynthesis via salvage pathway; L-methionine from S-methyl-5-thio-alpha-D-ribose 1-phosphate: step 3/6. Its pathway is amino-acid biosynthesis; L-methionine biosynthesis via salvage pathway; L-methionine from S-methyl-5-thio-alpha-D-ribose 1-phosphate: step 4/6. Its function is as follows. Bifunctional enzyme that catalyzes the enolization of 2,3-diketo-5-methylthiopentyl-1-phosphate (DK-MTP-1-P) into the intermediate 2-hydroxy-3-keto-5-methylthiopentenyl-1-phosphate (HK-MTPenyl-1-P), which is then dephosphorylated to form the acireductone 1,2-dihydroxy-3-keto-5-methylthiopentene (DHK-MTPene). This chain is Enolase-phosphatase E1, found in Pseudomonas syringae pv. tomato (strain ATCC BAA-871 / DC3000).